We begin with the raw amino-acid sequence, 188 residues long: F-box only protein 36 (188 aa).

The F-box domain maps to 91-137 (FDYLERLSDRLLLKIICYLDLEDIASLSQTSSKFEKLCKSDLLWEQI).

As to quaternary structure, directly interacts with SKP1 and CUL1.

Its function is as follows. Substrate-recognition component of the SCF (SKP1-CUL1-F-box protein)-type E3 ubiquitin ligase complex. The chain is F-box only protein 36 (Fbxo36) from Mus musculus (Mouse).